Here is a 431-residue protein sequence, read N- to C-terminus: Adenylosuccinate lyase (431 aa).

N(6)-(1,2-dicarboxyethyl)-AMP is bound by residues 4–5, 67–69, and 93–94; these read RY, RHD, and TS. Histidine 141 acts as the Proton donor/acceptor in catalysis. Glutamine 212 provides a ligand contact to N(6)-(1,2-dicarboxyethyl)-AMP. Catalysis depends on serine 262, which acts as the Proton donor/acceptor. N(6)-(1,2-dicarboxyethyl)-AMP is bound by residues serine 263, 268–270, asparagine 276, and 307–311; these read KRN and SAERI.

This sequence belongs to the lyase 1 family. Adenylosuccinate lyase subfamily. Homodimer and homotetramer. Residues from neighboring subunits contribute catalytic and substrate-binding residues to each active site.

The catalysed reaction is N(6)-(1,2-dicarboxyethyl)-AMP = fumarate + AMP. The enzyme catalyses (2S)-2-[5-amino-1-(5-phospho-beta-D-ribosyl)imidazole-4-carboxamido]succinate = 5-amino-1-(5-phospho-beta-D-ribosyl)imidazole-4-carboxamide + fumarate. It participates in purine metabolism; AMP biosynthesis via de novo pathway; AMP from IMP: step 2/2. It functions in the pathway purine metabolism; IMP biosynthesis via de novo pathway; 5-amino-1-(5-phospho-D-ribosyl)imidazole-4-carboxamide from 5-amino-1-(5-phospho-D-ribosyl)imidazole-4-carboxylate: step 2/2. Catalyzes two reactions in de novo purine nucleotide biosynthesis. Catalyzes the breakdown of 5-aminoimidazole- (N-succinylocarboxamide) ribotide (SAICAR or 2-[5-amino-1-(5-phospho-beta-D-ribosyl)imidazole-4-carboxamido]succinate) to 5-aminoimidazole-4-carboxamide ribotide (AICAR or 5-amino-1-(5-phospho-beta-D-ribosyl)imidazole-4-carboxamide) and fumarate, and of adenylosuccinate (ADS or N(6)-(1,2-dicarboxyethyl)-AMP) to adenosine monophosphate (AMP) and fumarate. This is Adenylosuccinate lyase (purB) from Staphylococcus saprophyticus subsp. saprophyticus (strain ATCC 15305 / DSM 20229 / NCIMB 8711 / NCTC 7292 / S-41).